The following is a 176-amino-acid chain: NAD(P)H-quinone oxidoreductase subunit 6, chloroplastic (176 aa).

The next 5 membrane-spanning stretches (helical) occupy residues 10–30 (FLLV…VLLT), 33–53 (IYSA…HIPA), 61–81 (AQLL…VMFM), 92–112 (LWTV…VSLI), and 152–172 (FFLP…GAIA).

It belongs to the complex I subunit 6 family. In terms of assembly, NDH is composed of at least 16 different subunits, 5 of which are encoded in the nucleus.

It is found in the plastid. It localises to the chloroplast thylakoid membrane. The enzyme catalyses a plastoquinone + NADH + (n+1) H(+)(in) = a plastoquinol + NAD(+) + n H(+)(out). It catalyses the reaction a plastoquinone + NADPH + (n+1) H(+)(in) = a plastoquinol + NADP(+) + n H(+)(out). NDH shuttles electrons from NAD(P)H:plastoquinone, via FMN and iron-sulfur (Fe-S) centers, to quinones in the photosynthetic chain and possibly in a chloroplast respiratory chain. The immediate electron acceptor for the enzyme in this species is believed to be plastoquinone. Couples the redox reaction to proton translocation, and thus conserves the redox energy in a proton gradient. This chain is NAD(P)H-quinone oxidoreductase subunit 6, chloroplastic (ndhG), found in Nandina domestica (Heavenly bamboo).